Here is a 70-residue protein sequence, read N- to C-terminus: Small ribosomal subunit protein bS21B (70 aa).

It belongs to the bacterial ribosomal protein bS21 family.

The chain is Small ribosomal subunit protein bS21B from Cupriavidus metallidurans (strain ATCC 43123 / DSM 2839 / NBRC 102507 / CH34) (Ralstonia metallidurans).